Here is a 419-residue protein sequence, read N- to C-terminus: Maltoporin 2 (419 aa).

A signal peptide spans Met-1–Ala-23.

The protein belongs to the porin LamB (TC 1.B.3) family. Homotrimer formed of three 18-stranded antiparallel beta-barrels, containing three independent channels.

The protein localises to the cell outer membrane. The catalysed reaction is beta-maltose(in) = beta-maltose(out). In terms of biological role, involved in the transport of maltose and maltodextrins. This chain is Maltoporin 2, found in Yersinia pestis bv. Antiqua (strain Antiqua).